The chain runs to 205 residues: 3-isopropylmalate dehydratase small subunit (205 aa).

It belongs to the LeuD family. LeuD type 1 subfamily. As to quaternary structure, heterodimer of LeuC and LeuD.

It carries out the reaction (2R,3S)-3-isopropylmalate = (2S)-2-isopropylmalate. It functions in the pathway amino-acid biosynthesis; L-leucine biosynthesis; L-leucine from 3-methyl-2-oxobutanoate: step 2/4. Its function is as follows. Catalyzes the isomerization between 2-isopropylmalate and 3-isopropylmalate, via the formation of 2-isopropylmaleate. This chain is 3-isopropylmalate dehydratase small subunit, found in Christiangramia forsetii (strain DSM 17595 / CGMCC 1.15422 / KT0803) (Gramella forsetii).